The primary structure comprises 29 residues: Kalata-B11 (29 aa).

The cyclopeptide (Gly-Asp) cross-link spans 1–29 (GLPVCGETCFGGTCNTPGCSCTDPICTRD). Cystine bridges form between Cys5–Cys19, Cys9–Cys21, and Cys14–Cys26.

This is a cyclic peptide.

In terms of biological role, probably participates in a plant defense mechanism. The sequence is that of Kalata-B11 from Oldenlandia affinis.